The sequence spans 349 residues: MKVLGLETSCDETGLAIFDSEQINSENKGLLGQVLYSQIELHALYGGVVPELASRDHIRKLVPLFNELLAQCNISKDEIDAIAYTKGPGLIGALMTGALFGRSLAYGLDIPAIGIHHMEGHLLAPLMGLNPPAFPFVSLLVSGGHTLLIAAHGIGQYEILGESIDDAAGECFDKAAKMLGLPYPGGPNIAKLAENGNPNAYSLPRPMLHRGLDFSFSGMKTAVHNLIKDTDGSGNGSDSDPQVRADIAASFQHAVVDTLVKKCVKALKQVDMSRLVIAGGVSANSHLRETLERELAKINATVHYAPPALCTDNGAMIAYAGYERLQAGQSDDLAVSCVPRWPMTELPAV.

Positions 117 and 121 each coordinate Fe cation. Residues 140 to 144 (LVSGG), D173, G186, and N284 each bind substrate. D312 contacts Fe cation.

Belongs to the KAE1 / TsaD family. Requires Fe(2+) as cofactor.

The protein resides in the cytoplasm. It catalyses the reaction L-threonylcarbamoyladenylate + adenosine(37) in tRNA = N(6)-L-threonylcarbamoyladenosine(37) in tRNA + AMP + H(+). In terms of biological role, required for the formation of a threonylcarbamoyl group on adenosine at position 37 (t(6)A37) in tRNAs that read codons beginning with adenine. Is involved in the transfer of the threonylcarbamoyl moiety of threonylcarbamoyl-AMP (TC-AMP) to the N6 group of A37, together with TsaE and TsaB. TsaD likely plays a direct catalytic role in this reaction. In Psychrobacter arcticus (strain DSM 17307 / VKM B-2377 / 273-4), this protein is tRNA N6-adenosine threonylcarbamoyltransferase.